The following is a 398-amino-acid chain: Putative isocitrate lyase subunit B (398 aa).

It belongs to the isocitrate lyase/PEP mutase superfamily. Isocitrate lyase family. Mg(2+) is required as a cofactor.

The enzyme catalyses D-threo-isocitrate = glyoxylate + succinate. In terms of biological role, together with AceAa, they could catalyze the formation of succinate and glyoxylate from isocitrate. The polypeptide is Putative isocitrate lyase subunit B (aceAb) (Mycobacterium tuberculosis (strain ATCC 25618 / H37Rv)).